Consider the following 1509-residue polypeptide: Dynein axonemal assembly factor 1 homolog (1509 aa).

LRR repeat units follow at residues 34–56 (RLND…EEYT), 57–78 (ELKC…EKLS), 79–100 (KLKC…EPCR), 101–122 (ELDT…GTNI), 125–146 (VLNT…SDLV), and 150–171 (TLSV…KIFE). The region spanning 185–223 (PVVSRLPQYRKTLILACKELTYLDSRPVFPRDRACAEAW) is the LRRCT domain. Disordered stretches follow at residues 252-280 (CTIR…DDTC), 306-327 (HPTS…ATSS), 962-1008 (SGDL…DSKN), and 1103-1122 (TLQT…KLRN). Over residues 309-318 (SESGASTSSS) the composition is skewed to low complexity. Acidic residues predominate over residues 978–990 (SESEDYDTADDEY). The segment covering 1103–1112 (TLQTSFSTVG) has biased composition (polar residues).

This sequence belongs to the DNAAF1 family.

The protein localises to the cell projection. It localises to the cilium. Its function is as follows. Cilium-specific protein required for cilia structures. The protein is Dynein axonemal assembly factor 1 homolog (dtr) of Drosophila yakuba (Fruit fly).